Reading from the N-terminus, the 890-residue chain is Protein translocase subunit SecA (890 aa).

Residues Q85, 103-107 (GEGKT), and D491 contribute to the ATP site.

The protein belongs to the SecA family. Monomer and homodimer. Part of the essential Sec protein translocation apparatus which comprises SecA, SecYEG and auxiliary proteins SecDF. Other proteins may also be involved.

It is found in the cell membrane. The protein localises to the cytoplasm. The enzyme catalyses ATP + H2O + cellular proteinSide 1 = ADP + phosphate + cellular proteinSide 2.. In terms of biological role, part of the Sec protein translocase complex. Interacts with the SecYEG preprotein conducting channel. Has a central role in coupling the hydrolysis of ATP to the transfer of proteins into and across the cell membrane, serving as an ATP-driven molecular motor driving the stepwise translocation of polypeptide chains across the membrane. The polypeptide is Protein translocase subunit SecA (Mycoplasmoides gallisepticum (strain R(low / passage 15 / clone 2)) (Mycoplasma gallisepticum)).